We begin with the raw amino-acid sequence, 947 residues long: Bifunctional glutamine synthetase adenylyltransferase/adenylyl-removing enzyme (947 aa).

The interval M1 to E440 is adenylyl removase. Positions S450–V947 are adenylyl transferase.

It belongs to the GlnE family. It depends on Mg(2+) as a cofactor.

The catalysed reaction is [glutamine synthetase]-O(4)-(5'-adenylyl)-L-tyrosine + phosphate = [glutamine synthetase]-L-tyrosine + ADP. The enzyme catalyses [glutamine synthetase]-L-tyrosine + ATP = [glutamine synthetase]-O(4)-(5'-adenylyl)-L-tyrosine + diphosphate. Its function is as follows. Involved in the regulation of glutamine synthetase GlnA, a key enzyme in the process to assimilate ammonia. When cellular nitrogen levels are high, the C-terminal adenylyl transferase (AT) inactivates GlnA by covalent transfer of an adenylyl group from ATP to specific tyrosine residue of GlnA, thus reducing its activity. Conversely, when nitrogen levels are low, the N-terminal adenylyl removase (AR) activates GlnA by removing the adenylyl group by phosphorolysis, increasing its activity. The regulatory region of GlnE binds the signal transduction protein PII (GlnB) which indicates the nitrogen status of the cell. This chain is Bifunctional glutamine synthetase adenylyltransferase/adenylyl-removing enzyme, found in Salmonella enteritidis PT4 (strain P125109).